The sequence spans 436 residues: Trigger factor (436 aa).

One can recognise a PPIase FKBP-type domain in the interval 161–246 (EDQLNIDFVG…VNTVSEPKLP (86 aa)).

Belongs to the FKBP-type PPIase family. Tig subfamily.

Its subcellular location is the cytoplasm. The catalysed reaction is [protein]-peptidylproline (omega=180) = [protein]-peptidylproline (omega=0). Its function is as follows. Involved in protein export. Acts as a chaperone by maintaining the newly synthesized protein in an open conformation. Functions as a peptidyl-prolyl cis-trans isomerase. This is Trigger factor from Pseudomonas savastanoi pv. phaseolicola (strain 1448A / Race 6) (Pseudomonas syringae pv. phaseolicola (strain 1448A / Race 6)).